We begin with the raw amino-acid sequence, 756 residues long: MQSVFNATRVSAVVGGKEIILETGRLANQAHGAVWVQCGGTVVLVTACTQPLERDMGFFPLTVDYSEKMYAAGRIPGSFFRREIGRPSERETLVSRLIDRPVRPLFTKGFRDEVQILANVISADQENDSDVLAVTGASAALSISPIPFEGPVAGARIGRVNGEFVLNPTMKEMEASDLAIVIAASRDSVVMVEGEAHFVPEDVIVAALEWAHKEIQPLIDAQLKLMELVGKAKMAVTPPVENAELKARVAELATTELDAALRIPEKMARKDARKAVKEKVLEALLADPALAENANLGREVGDMLGSLEKVLVRRRILKEGTRIDGRDTKTVRPILIEAGLLPRAHGSALFSRGETKSLVVATLGSSTDSQRMDSLVGDVTKKFMLHYNFPPYSVGEVKMSRVSRREIGHGALAEKALKPVLPQDDSFPFTLRVVAETMESNGSSSMAAVCGGSLSLMDAGVPVTAPVAGVAMGLIKEEGEYLVLTDILGDEDALGDMDFKIAGTAEGITAVQMDIKITGLPTDVMARAMAQAREARLHILAEMAKVLEAPRTELSKYAPQHAEVFVNPDVIRIIIGPGGKNIKAITAATGASIDIEDSGKVSIFAPTYEAMEMAREMVQYYDQRAELGKNYVGKVRKVLEIGAIVEILPNLEALVHISQLDTNRVEQAGDVARLGEDMTVKVIEINGDRIRASRKAVLLEEQGVEWNPEDTARPSGPPRDRGDRGDRGGRGDRGGDRRGGDRGGRGGDRGRGGDRR.

Asp492 and Asp498 together coordinate Mg(2+). One can recognise a KH domain in the interval 559–618; sequence PQHAEVFVNPDVIRIIIGPGGKNIKAITAATGASIDIEDSGKVSIFAPTYEAMEMAREMV. The S1 motif domain maps to 628–702; it reads GKNYVGKVRK…SRKAVLLEEQ (75 aa). The interval 703 to 756 is disordered; the sequence is GVEWNPEDTARPSGPPRDRGDRGDRGGRGDRGGDRRGGDRGGRGGDRGRGGDRR. Over residues 718 to 756 the composition is skewed to basic and acidic residues; that stretch reads PRDRGDRGDRGGRGDRGGDRRGGDRGGRGGDRGRGGDRR.

The protein belongs to the polyribonucleotide nucleotidyltransferase family. Mg(2+) serves as cofactor.

The protein localises to the cytoplasm. The enzyme catalyses RNA(n+1) + phosphate = RNA(n) + a ribonucleoside 5'-diphosphate. Functionally, involved in mRNA degradation. Catalyzes the phosphorolysis of single-stranded polyribonucleotides processively in the 3'- to 5'-direction. This is Polyribonucleotide nucleotidyltransferase from Nitratidesulfovibrio vulgaris (strain DSM 19637 / Miyazaki F) (Desulfovibrio vulgaris).